The chain runs to 397 residues: Putative F-box protein At1g26510 (397 aa).

The disordered stretch occupies residues methionine 1–lysine 23. One can recognise an F-box domain in the interval glutamine 24–serine 71.

The protein is Putative F-box protein At1g26510 of Arabidopsis thaliana (Mouse-ear cress).